A 300-amino-acid polypeptide reads, in one-letter code: Quinolinate synthase (300 aa).

H23 and S40 together coordinate iminosuccinate. C85 lines the [4Fe-4S] cluster pocket. Iminosuccinate contacts are provided by residues 111-113 (YIN) and S128. C171 is a [4Fe-4S] cluster binding site. Iminosuccinate contacts are provided by residues 198-200 (HPE) and T215. C258 contributes to the [4Fe-4S] cluster binding site.

It belongs to the quinolinate synthase family. Type 2 subfamily. It depends on [4Fe-4S] cluster as a cofactor.

The protein resides in the cytoplasm. The catalysed reaction is iminosuccinate + dihydroxyacetone phosphate = quinolinate + phosphate + 2 H2O + H(+). Its pathway is cofactor biosynthesis; NAD(+) biosynthesis; quinolinate from iminoaspartate: step 1/1. Catalyzes the condensation of iminoaspartate with dihydroxyacetone phosphate to form quinolinate. The sequence is that of Quinolinate synthase from Clostridium novyi (strain NT).